We begin with the raw amino-acid sequence, 312 residues long: Ribosomal protein L11 methyltransferase (312 aa).

Residues Thr-160, Gly-181, Asp-203, and Asn-248 each contribute to the S-adenosyl-L-methionine site.

This sequence belongs to the methyltransferase superfamily. PrmA family.

The protein resides in the cytoplasm. It catalyses the reaction L-lysyl-[protein] + 3 S-adenosyl-L-methionine = N(6),N(6),N(6)-trimethyl-L-lysyl-[protein] + 3 S-adenosyl-L-homocysteine + 3 H(+). Its function is as follows. Methylates ribosomal protein L11. The sequence is that of Ribosomal protein L11 methyltransferase from Fusobacterium nucleatum subsp. nucleatum (strain ATCC 25586 / DSM 15643 / BCRC 10681 / CIP 101130 / JCM 8532 / KCTC 2640 / LMG 13131 / VPI 4355).